The chain runs to 757 residues: Inhibitor of nuclear factor kappa-B kinase subunit beta (757 aa).

Residues 15–300 (WEMKERLGTG…DPQYGPNGCF (286 aa)) form the Protein kinase domain. ATP is bound by residues 21-29 (LGTGGFGNV) and lysine 44. Catalysis depends on aspartate 145, which acts as the Proton acceptor. Lysine 163 participates in a covalent cross-link: Glycyl lysine isopeptide (Lys-Gly) (interchain with G-Cter in ubiquitin). Serine 177 bears the Phosphoserine; by TBK1 and PKC/PRKCZ mark. S-nitrosocysteine is present on cysteine 179. Serine 181 is subject to Phosphoserine; by TBK1, PKC/PRKCZ and PDPK1. The residue at position 191 (proline 191) is a Hydroxyproline. The segment at 458–479 (LLRNNSCLSKMKNAMASTAQQL) is leucine-zipper. Serine 670 bears the Phosphoserine; by autocatalysis mark. Serine 672 carries the post-translational modification Phosphoserine. Serine 675, serine 682, serine 689, serine 692, serine 697, serine 705, serine 733, and serine 740 each carry phosphoserine; by autocatalysis. The segment at 683 to 703 (HPGQLMSQPSSACDSLPESDK) is disordered. The interval 737 to 742 (LDWSWL) is NEMO-binding.

Belongs to the protein kinase superfamily. Ser/Thr protein kinase family. I-kappa-B kinase subfamily. Component of the I-kappa-B-kinase (IKK) core complex consisting of CHUK, IKBKB and IKBKG; probably four alpha/CHUK-beta/IKBKB dimers are associated with four gamma/IKBKG subunits. The IKK core complex seems to associate with regulatory or adapter proteins to form a IKK-signalosome holo-complex. The IKK complex associates with TERF2IP/RAP1, leading to promote IKK-mediated phosphorylation of RELA/p65. Part of a complex composed of NCOA2, NCOA3, CHUK/IKKA, IKBKB, IKBKG and CREBBP. Part of a 70-90 kDa complex at least consisting of CHUK/IKKA, IKBKB, NFKBIA, RELA, ELP1 and MAP3K14. Found in a membrane raft complex, at least composed of BCL10, CARD11, DPP4 and IKBKB. Interacts with SQSTM1 through PRKCZ or PRKCI. Forms an NGF-induced complex with IKBKB, PRKCI and TRAF6. May interact with MAVS/IPS1. Interacts with NALP2. Interacts with TICAM1. Interacts with FAF1; the interaction disrupts the IKK complex formation. Interacts with ATM. Part of a ternary complex consisting of TANK, IKBKB and IKBKG. Interacts with NIBP; the interaction is direct. Interacts with ARRB1 and ARRB2. Interacts with TRIM21. Interacts with NLRC5; prevents IKBKB phosphorylation and kinase activity. Interacts with PDPK1. Interacts with EIF2AK2/PKR. The phosphorylated form interacts with PPM1A and PPM1B. Interacts with ZNF268 isoform 2; the interaction is further increased in a TNF-alpha-dependent manner. Interacts with IKBKE. Interacts with ZC3H12A. Interacts with AKAP13. Interacts with LRRC14; disrupts IKBKB-IKBKG interaction preventing I-kappa-B-kinase (IKK) core complex formation and leading to a decrease of IKBKB phosphorylation and NF-kappaB activation. Interacts with SASH1. Interacts with ARFIP2. Interacts with FKBP5. Interacts with kinase TBK1; the complex interacts with STAT1, leading to phosphorylation of STAT1 on 'Thr-748' by IKBKB. In terms of processing, upon cytokine stimulation, phosphorylated on Ser-177 and Ser-181 by MEKK1 and/or MAP3K14/NIK as well as TBK1 and PRKCZ; which enhances activity. Phosphorylated by MAP3K7/TAK1 in response to NOD1 and NOD2 signaling, promoting activation and phosphorylation of NF-kappa-B inhibitors, leading to NF-kappa-B activation. Once activated, autophosphorylates on the C-terminal serine cluster; which decreases activity and prevents prolonged activation of the inflammatory response. Phosphorylated by the IKK-related kinases TBK1 and IKBKE, which is associated with reduced CHUK/IKKA and IKBKB activity and NF-kappa-B-dependent gene transcription. Dephosphorylated at Ser-177 and Ser-181 by PPM1A and PPM1B. Post-translationally, ubiquitinated. Monoubiquitination involves TRIM21 that leads to inhibition of Tax-induced NF-kappa-B signaling. 'Ser-163' may not serve as a monoubiquitination site. Ubiquitination on 'Ser-163' may modulate phosphorylation on C-terminal serine residues. Hydroxylated by PHD1/EGLN2, loss of hydroxylation under hypoxic conditions results in activation of NF-kappa-B. In terms of tissue distribution, detected in heart (at protein level). Expressed in liver, kidney and spleen.

It is found in the cytoplasm. The protein localises to the nucleus. It localises to the membrane raft. The catalysed reaction is L-seryl-[I-kappa-B protein] + ATP = O-phospho-L-seryl-[I-kappa-B protein] + ADP + H(+). It catalyses the reaction L-seryl-[protein] + ATP = O-phospho-L-seryl-[protein] + ADP + H(+). It carries out the reaction L-threonyl-[protein] + ATP = O-phospho-L-threonyl-[protein] + ADP + H(+). Functionally, serine kinase that plays an essential role in the NF-kappa-B signaling pathway which is activated by multiple stimuli such as inflammatory cytokines, bacterial or viral products, DNA damages or other cellular stresses. Acts as a part of the canonical IKK complex in the conventional pathway of NF-kappa-B activation. Phosphorylates inhibitors of NF-kappa-B on 2 critical serine residues. These modifications allow polyubiquitination of the inhibitors and subsequent degradation by the proteasome. In turn, free NF-kappa-B is translocated into the nucleus and activates the transcription of hundreds of genes involved in immune response, growth control, or protection against apoptosis. In addition to the NF-kappa-B inhibitors, phosphorylates several other components of the signaling pathway including NEMO/IKBKG, NF-kappa-B subunits RELA and NFKB1, as well as IKK-related kinases TBK1 and IKBKE. IKK-related kinase phosphorylations may prevent the overproduction of inflammatory mediators since they exert a negative regulation on canonical IKKs. Phosphorylates FOXO3, mediating the TNF-dependent inactivation of this pro-apoptotic transcription factor. Also phosphorylates other substrates including NAA10, NCOA3, BCL10 and IRS1. Phosphorylates RIPK1 at 'Ser-25' which represses its kinase activity and consequently prevents TNF-mediated RIPK1-dependent cell death. Phosphorylates the C-terminus of IRF5, stimulating IRF5 homodimerization and translocation into the nucleus. Following bacterial lipopolysaccharide (LPS)-induced TLR4 endocytosis, phosphorylates STAT1 at 'Thr-748' which restricts interferon signaling and anti-inflammatory responses and promotes innate inflammatory responses. IKBKB-mediated phosphorylation of STAT1 at 'Thr-748' promotes binding of STAT1 to the ARID5A promoter, resulting in transcriptional activation of ARID5A and subsequent ARID5A-mediated stabilization of IL6. It also promotes binding of STAT1 to the IL12B promoter and activation of IL12B transcription. This Mus musculus (Mouse) protein is Inhibitor of nuclear factor kappa-B kinase subunit beta (Ikbkb).